The chain runs to 290 residues: 2-phosphoglycerate kinase (290 aa).

The ATP-cone domain maps to Met1–Val89.

Belongs to the 2-phosphoglycerate kinase family. Requires a divalent metal cation as cofactor.

The enzyme catalyses (2R)-2-phosphoglycerate + ATP = (2R)-2,3-bisphosphoglycerate + ADP + H(+). It functions in the pathway thermoadapter biosynthesis; cyclic 2,3-diphosphoglycerate biosynthesis; cyclic 2,3-diphosphoglycerate from 2-phospho-D-glycerate: step 1/2. Its function is as follows. Catalyzes the phosphorylation of 2-phosphoglycerate to 2,3-diphosphoglycerate. Involved in the biosynthesis of cyclic 2,3-bisphosphoglycerate, a thermoprotectant. The protein is 2-phosphoglycerate kinase of Thermococcus kodakarensis (strain ATCC BAA-918 / JCM 12380 / KOD1) (Pyrococcus kodakaraensis (strain KOD1)).